A 338-amino-acid polypeptide reads, in one-letter code: UDP-glucose 4-epimerase (338 aa).

Residues 11–12 (YI), 31–36 (DNLCNS), 58–59 (DI), 80–84 (FAGLK), Asn99, Ser124, Tyr149, Lys153, and Phe178 each bind NAD(+). Substrate is bound by residues Ser124 and Tyr149. Tyr149 functions as the Proton acceptor in the catalytic mechanism. Residues Asn179, 199-200 (NL), 216-218 (AIF), Arg231, 292-295 (REGD), and Tyr299 contribute to the substrate site.

Belongs to the NAD(P)-dependent epimerase/dehydratase family. As to quaternary structure, homodimer. It depends on NAD(+) as a cofactor.

It catalyses the reaction UDP-alpha-D-glucose = UDP-alpha-D-galactose. Its pathway is carbohydrate metabolism; galactose metabolism. Functionally, involved in the metabolism of galactose. Catalyzes the conversion of UDP-galactose (UDP-Gal) to UDP-glucose (UDP-Glc) through a mechanism involving the transient reduction of NAD. This chain is UDP-glucose 4-epimerase (galE), found in Yersinia pestis.